The primary structure comprises 187 residues: MYKILEIADVVKVPPEEFGKDLKETVKKILMEKYEGRLDKDVGFVLSIVDVKDIGEGKVVHGDGSAYHPVVFETLVYIPEMYELIEGEVVDVVEFGSFVRLGPLDGLIHVSQIMDDYVSYDPKREAIIGKETGKVLEIGDYVRARIVAISLKAERKRGSKIALTMRQPYLGKLEWIEEEKAKKQNQE.

Residues 82 to 166 (YELIEGEVVD…RGSKIALTMR (85 aa)) form the S1 motif domain.

Belongs to the eukaryotic RPB7/RPC8 RNA polymerase subunit family. In terms of assembly, part of the RNA polymerase complex. Forms a stalk with Rpo4 that extends from the main structure.

It is found in the cytoplasm. It catalyses the reaction RNA(n) + a ribonucleoside 5'-triphosphate = RNA(n+1) + diphosphate. In terms of biological role, DNA-dependent RNA polymerase (RNAP) catalyzes the transcription of DNA into RNA using the four ribonucleoside triphosphates as substrates. The polypeptide is DNA-directed RNA polymerase subunit Rpo7 (Methanocaldococcus jannaschii (strain ATCC 43067 / DSM 2661 / JAL-1 / JCM 10045 / NBRC 100440) (Methanococcus jannaschii)).